The chain runs to 226 residues: Sugar fermentation stimulation protein homolog (226 aa).

The protein belongs to the SfsA family.

The polypeptide is Sugar fermentation stimulation protein homolog (Ruminiclostridium cellulolyticum (strain ATCC 35319 / DSM 5812 / JCM 6584 / H10) (Clostridium cellulolyticum)).